Reading from the N-terminus, the 347-residue chain is MSRPDSAVSLLPDYSLRAHNTFGFDARARVAARIGSPGQFASLARDPRVAGLDRLVLGGGSNVVFTRDFDGLVLLDEIRSRALVREDDGAWYVEAGGGENWHAFVEWTLAEGMPGLENLALIPGTVGAAPIQNIGAYGLEMKEHFASLRAVDLATGELVEFDAARCAFGYRDSFFKRDGRGRFAIVAVTFRLPKAWTPRIGYADVARELAARGIDARAARARDVFDAVVAIRRAKLPDPLALGNAGSFFKNPVIDAQAFAALRAREPDIVSYPQPDGRVKLAAGWLIDRCGWKGRALGAAAVHERQALVLVNLGGASGADVLALAHAIRRDVLGRFGVELEMEPVCL.

The region spanning 24-195 (FDARARVAAR…VAVTFRLPKA (172 aa)) is the FAD-binding PCMH-type domain. Arginine 171 is an active-site residue. Serine 247 acts as the Proton donor in catalysis. Residue glutamate 343 is part of the active site.

This sequence belongs to the MurB family. It depends on FAD as a cofactor.

Its subcellular location is the cytoplasm. The catalysed reaction is UDP-N-acetyl-alpha-D-muramate + NADP(+) = UDP-N-acetyl-3-O-(1-carboxyvinyl)-alpha-D-glucosamine + NADPH + H(+). Its pathway is cell wall biogenesis; peptidoglycan biosynthesis. Functionally, cell wall formation. The polypeptide is UDP-N-acetylenolpyruvoylglucosamine reductase (Burkholderia pseudomallei (strain 668)).